The sequence spans 94 residues: Protein LURE 1.1 (94 aa).

An N-terminal signal peptide occupies residues 1–19 (MKLIFIFLTLLIFVSSCTS). Intrachain disulfides connect C58–C75, C61–C82, and C65–C84. Residues 67–87 (RRDRYIRTCSFERKLCRCSYS) form a PRK6 binding region.

The protein belongs to the DEFL family. In terms of assembly, binds to PRK6 LRRs. In terms of tissue distribution, expressed in the pistil. Detected exclusively in the synergid cells.

The protein resides in the secreted. Pollen tube attractants guiding pollen tubes to the ovular micropyle. The polypeptide is Protein LURE 1.1 (Arabidopsis thaliana (Mouse-ear cress)).